Reading from the N-terminus, the 367-residue chain is Phosphoribosylaminoimidazole-succinocarboxamide synthase (367 aa).

This sequence belongs to the SAICAR synthetase family.

The catalysed reaction is 5-amino-1-(5-phospho-D-ribosyl)imidazole-4-carboxylate + L-aspartate + ATP = (2S)-2-[5-amino-1-(5-phospho-beta-D-ribosyl)imidazole-4-carboxamido]succinate + ADP + phosphate + 2 H(+). It functions in the pathway purine metabolism; IMP biosynthesis via de novo pathway; 5-amino-1-(5-phospho-D-ribosyl)imidazole-4-carboxamide from 5-amino-1-(5-phospho-D-ribosyl)imidazole-4-carboxylate: step 1/2. The chain is Phosphoribosylaminoimidazole-succinocarboxamide synthase from Shewanella baltica (strain OS155 / ATCC BAA-1091).